A 960-amino-acid chain; its full sequence is Phosphoenolpyruvate carboxylase 3 (960 aa).

Serine 8 bears the Phosphoserine mark. Residues histidine 167 and lysine 597 contribute to the active site.

Belongs to the PEPCase type 1 family. In terms of assembly, homotetramer. It depends on Mg(2+) as a cofactor.

The protein resides in the cytoplasm. The catalysed reaction is oxaloacetate + phosphate = phosphoenolpyruvate + hydrogencarbonate. It functions in the pathway photosynthesis; C4 acid pathway. By light-reversible phosphorylation. In terms of biological role, through the carboxylation of phosphoenolpyruvate (PEP) it forms oxaloacetate, a four-carbon dicarboxylic acid source for the tricarboxylic acid cycle. In Sorghum bicolor (Sorghum), this protein is Phosphoenolpyruvate carboxylase 3.